The following is a 773-amino-acid chain: Transducin-like enhancer protein 4 (773 aa).

Disordered stretches follow at residues 1-22 (MIRD…QPAQ), 140-162 (HGHG…AIPP), and 182-360 (LPIK…ASSL). The segment at 1–136 (MIRDLSKMYP…AIIGQQLQAQ (136 aa)) is q domain. Positions 137–204 (HLSHGHGLPV…HQRDRDSIKS (68 aa)) are GP domain. Positions 183–202 (PIKDEKKHHDNDHQRDRDSI) are enriched in basic and acidic residues. Positions 203–212 (KSSSVSPSAS) are enriched in low complexity. Residues 205–274 (SSVSPSASFR…SPRGSPAHSP (70 aa)) form a ccN domain region. 3 positions are modified to phosphoserine: serine 208, serine 212, and serine 222. The segment covering 215–252 (GAEKHRNSADYSSESKKQKTEEKEIAARYDSDGEKSDD) has biased composition (basic and acidic residues). Lysine 237 is modified (N6-acetyllysine). Serine 245, serine 250, serine 269, and serine 273 each carry phosphoserine. Over residues 273 to 289 (SPRENGLDKTRLLKKDA) the composition is skewed to basic and acidic residues. The tract at residues 275 to 452 (RENGLDKTRL…PGGKPAYSFH (178 aa)) is SP domain. Lysine 281 carries the N6-acetyllysine modification. A compositionally biased stretch (low complexity) spans 290-305 (PISPASIASSSSTPSS). A Phosphoserine modification is found at serine 292. Residues 317–328 (TTPVSKSNTPTP) show a composition bias toward polar residues. A Phosphothreonine modification is found at threonine 318. Residues serine 321 and serine 323 each carry the phosphoserine modification. Residues threonine 325, threonine 327, threonine 334, and threonine 340 each carry the phosphothreonine modification. Phosphoserine is present on serine 419. WD repeat units lie at residues 485 to 523 (NHGE…NKSP), 531 to 570 (NRDN…PRIK), 575 to 614 (SSAP…LVRQ), 617 to 656 (GHTD…QLQQ), 658 to 697 (DFTS…KYQL), 699 to 738 (LHES…SIFQ), and 740 to 773 (KESS…EVIY).

It belongs to the WD repeat Groucho/TLE family. In terms of assembly, homooligomer and heterooligomer with other family members. Interacts with PAX5. Interacts with LEF1, TCF7, TCF7L1 and TCF7L2. Interacts with ZNF703; TLE4 may mediate ZNF703 transcriptional repression. Interacts with SIX3 and SIX6. Interacts with PAX2. Interacts with TLE1. Post-translationally, phosphorylated. PAX5 binding increases phosphorylation. In terms of processing, ubiquitinated by XIAP/BIRC4. As to expression, in all tissues examined, mostly in brain, and muscle.

Its subcellular location is the nucleus. Transcriptional corepressor that binds to a number of transcription factors. Inhibits the transcriptional activation mediated by PAX5, and by CTNNB1 and TCF family members in Wnt signaling. The effects of full-length TLE family members may be modulated by association with dominant-negative AES. Essential for the transcriptional repressor activity of SIX3 during retina and lens development and for SIX3 transcriptional auto-repression. Involved in transcriptional repression of GNRHR and enhances MSX1-mediated transcriptional repression of CGA/alpha-GSU. The sequence is that of Transducin-like enhancer protein 4 (TLE4) from Homo sapiens (Human).